The sequence spans 465 residues: Poly(A) polymerase I (465 aa).

Active-site residues include Asp80, Asp82, and Asp162. The interval 430–465 (APPEQKGMLNELDDDPAPRRRRSRPRKRAPRREGTV) is disordered. Basic residues predominate over residues 448-459 (RRRRSRPRKRAP).

This sequence belongs to the tRNA nucleotidyltransferase/poly(A) polymerase family.

It carries out the reaction RNA(n) + ATP = RNA(n)-3'-adenine ribonucleotide + diphosphate. Adds poly(A) tail to the 3' end of many RNAs, which usually targets these RNAs for decay. Plays a significant role in the global control of gene expression, through influencing the rate of transcript degradation, and in the general RNA quality control. The chain is Poly(A) polymerase I from Salmonella typhi.